The sequence spans 412 residues: Peptidase T (412 aa).

Zn(2+) is bound at residue H81. Residue D83 is part of the active site. D144 is a binding site for Zn(2+). The active-site Proton acceptor is the E178. Zn(2+) contacts are provided by E179, D201, and H383.

The protein belongs to the peptidase M20B family. Zn(2+) is required as a cofactor.

Its subcellular location is the cytoplasm. It catalyses the reaction Release of the N-terminal residue from a tripeptide.. Cleaves the N-terminal amino acid of tripeptides. In Bacillus cereus (strain ATCC 14579 / DSM 31 / CCUG 7414 / JCM 2152 / NBRC 15305 / NCIMB 9373 / NCTC 2599 / NRRL B-3711), this protein is Peptidase T.